Reading from the N-terminus, the 147-residue chain is Hemoglobin subunit epsilon (147 aa).

The 145-residue stretch at 3–147 folds into the Globin domain; sequence HFTAEEKAAV…VAIALAHKYH (145 aa). Serine 14 and serine 51 each carry phosphoserine. Positions 64 and 93 each coordinate heme b.

This sequence belongs to the globin family. In terms of assembly, heterotetramer of two alpha chains and two epsilon chains in early embryonic hemoglobin Gower-2; two zeta chains and two epsilon chains in early embryonic hemoglobin Gower-1. As to expression, red blood cells.

Its function is as follows. The epsilon chain is a beta-type chain of early mammalian embryonic hemoglobin. This chain is Hemoglobin subunit epsilon (HBE1), found in Pan troglodytes (Chimpanzee).